The following is a 308-amino-acid chain: Large ribosomal subunit protein mL38 (308 aa).

Residues 1 to 17 (MKRVWPRIPTISNVCRA) constitute a mitochondrion transit peptide.

The protein belongs to the phosphatidylethanolamine-binding protein family. Mitochondrion-specific ribosomal protein mL38 subfamily. In terms of assembly, component of the mitochondrial large ribosomal subunit (mt-LSU). Mature yeast 74S mitochondrial ribosomes consist of a small (37S) and a large (54S) subunit. The 37S small subunit contains a 15S ribosomal RNA (15S mt-rRNA) and at least 32 different proteins. The 54S large subunit contains a 21S rRNA (21S mt-rRNA) and at least 45 different proteins.

Its subcellular location is the mitochondrion. Its function is as follows. Component of the mitochondrial ribosome (mitoribosome), a dedicated translation machinery responsible for the synthesis of mitochondrial genome-encoded proteins, including at least some of the essential transmembrane subunits of the mitochondrial respiratory chain. The mitoribosomes are attached to the mitochondrial inner membrane and translation products are cotranslationally integrated into the membrane. In Schizosaccharomyces pombe (strain 972 / ATCC 24843) (Fission yeast), this protein is Large ribosomal subunit protein mL38 (mrpl35).